The chain runs to 264 residues: tRNA (guanine-N(1)-)-methyltransferase (264 aa).

Residues G125 and 145–150 (LGDFVL) contribute to the S-adenosyl-L-methionine site.

The protein belongs to the RNA methyltransferase TrmD family. Homodimer.

Its subcellular location is the cytoplasm. The catalysed reaction is guanosine(37) in tRNA + S-adenosyl-L-methionine = N(1)-methylguanosine(37) in tRNA + S-adenosyl-L-homocysteine + H(+). Its function is as follows. Specifically methylates guanosine-37 in various tRNAs. This chain is tRNA (guanine-N(1)-)-methyltransferase, found in Burkholderia multivorans (strain ATCC 17616 / 249).